The primary structure comprises 170 residues: Ribosome maturation factor RimP (170 aa).

This sequence belongs to the RimP family.

It is found in the cytoplasm. Its function is as follows. Required for maturation of 30S ribosomal subunits. The polypeptide is Ribosome maturation factor RimP (Acidothermus cellulolyticus (strain ATCC 43068 / DSM 8971 / 11B)).